Consider the following 402-residue polypeptide: Imidazolonepropionase (402 aa).

Fe(3+) is bound by residues H66 and H68. Zn(2+)-binding residues include H66 and H68. The 4-imidazolone-5-propanoate site is built by R75, Y138, and H171. Y138 is an N-formimidoyl-L-glutamate binding site. Fe(3+) is bound at residue H236. H236 provides a ligand contact to Zn(2+). Q239 serves as a coordination point for 4-imidazolone-5-propanoate. D311 contributes to the Fe(3+) binding site. D311 lines the Zn(2+) pocket. Residues N313 and G315 each coordinate N-formimidoyl-L-glutamate. T316 serves as a coordination point for 4-imidazolone-5-propanoate.

It belongs to the metallo-dependent hydrolases superfamily. HutI family. It depends on Zn(2+) as a cofactor. Requires Fe(3+) as cofactor.

It localises to the cytoplasm. It carries out the reaction 4-imidazolone-5-propanoate + H2O = N-formimidoyl-L-glutamate. Its pathway is amino-acid degradation; L-histidine degradation into L-glutamate; N-formimidoyl-L-glutamate from L-histidine: step 3/3. Functionally, catalyzes the hydrolytic cleavage of the carbon-nitrogen bond in imidazolone-5-propanoate to yield N-formimidoyl-L-glutamate. It is the third step in the universal histidine degradation pathway. The sequence is that of Imidazolonepropionase from Vibrio cholerae serotype O1 (strain ATCC 39541 / Classical Ogawa 395 / O395).